A 334-amino-acid chain; its full sequence is G-protein coupled receptor 12 (334 aa).

The Extracellular segment spans residues 1–48 (MNEDLKVNLSGLPRDYLDAAAAENISAAVSSRVPAVEPEPELVVNPWD). N-linked (GlcNAc...) asparagine glycosylation is found at asparagine 8 and asparagine 24. A helical membrane pass occupies residues 49 to 69 (IVLCTSGTLISCENAIVVLII). Topologically, residues 70–77 (FHNPSLRA) are cytoplasmic. The chain crosses the membrane as a helical span at residues 78–98 (PMFLLIGSLALADLLAGIGLI). Residues 99–113 (TNFVFAYLLQSEATK) are Extracellular-facing. A helical membrane pass occupies residues 114–134 (LVTIGLIVASFSASVCSLLAI). At 135–158 (TVDRYLSLYYALTYHSERTVTFTY) the chain is on the cytoplasmic side. Residues 159–179 (VMLVMLWGTSICLGLLPVMGW) form a helical membrane-spanning segment. Residues 180–199 (NCLRDESTCSVVRPLTKNNA) lie on the Extracellular side of the membrane. Residues 200 to 220 (AILSVSFLFMFALMLQLYIQI) traverse the membrane as a helical segment. Residues 221–252 (CKIVMRHAHQIALQHHFLATSHYVTTRKGVST) are Cytoplasmic-facing. The helical transmembrane segment at 253–273 (LAIILGTFAACWMPFTLYSLI) threads the bilayer. Residues 274–282 (ADYTYPSIY) are Extracellular-facing. The helical transmembrane segment at 283 to 303 (TYATLLPATYNSIINPVIYAF) threads the bilayer. Residues 304 to 334 (RNQEIQKALCLICCGCIPSSLAQRARSPSDV) are Cytoplasmic-facing. Cysteine 317 carries the S-palmitoyl cysteine lipid modification. Residues serine 330 and serine 332 each carry the phosphoserine modification.

It belongs to the G-protein coupled receptor 1 family.

It localises to the cell membrane. Promotes neurite outgrowth and blocks myelin inhibition in neurons. Receptor with constitutive G(s) signaling activity that stimulates cyclic AMP production. This is G-protein coupled receptor 12 (GPR12) from Homo sapiens (Human).